The chain runs to 397 residues: Probable sugar efflux transporter (397 aa).

Transmembrane regions (helical) follow at residues 15–35 (VVTL…PVGL), 50–70 (VGIM…PFML), 81–101 (LICL…AWNF), 103–123 (VLVI…SITA), 136–156 (AQAL…GLPI), 169–189 (TFFA…KLLP), 209–229 (PALM…YTAY), 246–266 (FATV…VVFG), 275–295 (PLIS…LPAA), 301–321 (LAVL…GMQV), 333–353 (VAMA…ALVG), and 364–384 (TIGY…IIIF).

This sequence belongs to the major facilitator superfamily. SotB (TC 2.A.1.2) family.

It is found in the cell inner membrane. Involved in the efflux of sugars. The physiological role may be the reduction of the intracellular concentration of toxic sugars or sugar metabolites. The chain is Probable sugar efflux transporter from Citrobacter koseri (strain ATCC BAA-895 / CDC 4225-83 / SGSC4696).